We begin with the raw amino-acid sequence, 468 residues long: Argininosuccinate lyase (468 aa).

The protein belongs to the lyase 1 family. Argininosuccinate lyase subfamily.

It localises to the cytoplasm. The enzyme catalyses 2-(N(omega)-L-arginino)succinate = fumarate + L-arginine. Its pathway is amino-acid biosynthesis; L-arginine biosynthesis; L-arginine from L-ornithine and carbamoyl phosphate: step 3/3. The polypeptide is Argininosuccinate lyase (Zymomonas mobilis subsp. mobilis (strain ATCC 31821 / ZM4 / CP4)).